The following is a 770-amino-acid chain: DNA topoisomerase 1 (770 aa).

Residues 4–140 (FRIIIAEKAD…EIRRAKFSAL (137 aa)) form the Toprim domain. Mg(2+) is bound by residues Glu10 and Asp109. Residues 156 to 563 (NYSLADAADA…ESKKMLHEVL (408 aa)) form the Topo IA-type catalytic domain. Residues 194–199 (SAGRVQ) form an interaction with DNA region. Tyr312 functions as the O-(5'-phospho-DNA)-tyrosine intermediate in the catalytic mechanism. C4-type zinc fingers lie at residues 611–638 (CEDP…CPVC), 673–700 (CPAD…YPKC), and 719–744 (CPYC…NMQC).

It belongs to the type IA topoisomerase family. As to quaternary structure, monomer. Mg(2+) serves as cofactor.

The catalysed reaction is ATP-independent breakage of single-stranded DNA, followed by passage and rejoining.. Functionally, releases the supercoiling and torsional tension of DNA, which is introduced during the DNA replication and transcription, by transiently cleaving and rejoining one strand of the DNA duplex. Introduces a single-strand break via transesterification at a target site in duplex DNA. The scissile phosphodiester is attacked by the catalytic tyrosine of the enzyme, resulting in the formation of a DNA-(5'-phosphotyrosyl)-enzyme intermediate and the expulsion of a 3'-OH DNA strand. The free DNA strand then undergoes passage around the unbroken strand, thus removing DNA supercoils. Finally, in the religation step, the DNA 3'-OH attacks the covalent intermediate to expel the active-site tyrosine and restore the DNA phosphodiester backbone. The sequence is that of DNA topoisomerase 1 from Thermoplasma acidophilum (strain ATCC 25905 / DSM 1728 / JCM 9062 / NBRC 15155 / AMRC-C165).